A 265-amino-acid chain; its full sequence is Formyltransferase/hydrolase complex Fhc subunit C (265 aa).

It belongs to the FwdC/FmdC family. Octaheteromer. Part of the formyltransferase/hydrolase complex fhc; composed of FhcA, FhcB, FhcC and FhcD.

The protein localises to the cytoplasm. Its pathway is one-carbon metabolism; formaldehyde degradation; formate from formaldehyde (H(4)MPT route): step 4/5. In terms of biological role, involved in the transformation of 5-formyl tetrahydromethanopterin (5-formyl-H(4)MPT) to methanofuran (MFR) and formate via the formylmethanofuran (formyl-MFR). This is Formyltransferase/hydrolase complex Fhc subunit C (fhcC) from Methylorubrum extorquens (strain ATCC 14718 / DSM 1338 / JCM 2805 / NCIMB 9133 / AM1) (Methylobacterium extorquens).